We begin with the raw amino-acid sequence, 308 residues long: Solute carrier family 25 member 47 (308 aa).

Solcar repeat units follow at residues M1 to H80, P93 to W206, and P215 to L302. Transmembrane regions (helical) follow at residues F3–V23, V49–V69, I98–T116, G190–A210, V217–P237, and V273–F293.

This sequence belongs to the mitochondrial carrier (TC 2.A.29) family. Specifically expressed in liver.

Its subcellular location is the mitochondrion inner membrane. The protein localises to the mitochondrion outer membrane. It catalyses the reaction NAD(+)(in) = NAD(+)(out). The catalysed reaction is acetyl-CoA(in) = acetyl-CoA(out). Mitochondrial NAD(+) transporter that acts as a 'metabolic gate' in hepatic lipogenesis. Provides NAD(+) substrate to mitochondrial SIRT3 deacetylase and enables its NAD(+)-dependent activities in mitochondrial energy metabolism. This triggers downstream activation of PRKAA1/AMPK-alpha signaling cascade that negatively regulates sterol regulatory element-binding protein (SREBP) transcriptional activities and ATP-consuming lipogenesis to restore cellular energy balance. May transport other mitochondrial metabolites having an aromatic nucleotide and phosphate groups, such as acetyl-CoA. Does not transport amino acids. The transport mechanism remains to be elucidated. In Homo sapiens (Human), this protein is Solute carrier family 25 member 47.